The sequence spans 128 residues: Dehydrin Xero 1 (128 aa).

The span at 1–19 (MESYQNQSGAQQTHQQLDQ) shows a compositional bias: polar residues. A disordered region spans residues 1-128 (MESYQNQSGA…IKEKLPGGHH (128 aa)). 2 stretches are compositionally biased toward low complexity: residues 23 to 41 (PFPA…PAVA) and 48 to 60 (GMLH…SSSS). The segment covering 75 to 91 (GITEKIKEKLPGHHDSN) has biased composition (basic and acidic residues). The span at 92 to 104 (KTSSLGSTTTAYD) shows a compositional bias: polar residues. The span at 107–128 (TVHHEKKGMMEKIKEKLPGGHH) shows a compositional bias: basic and acidic residues.

It belongs to the plant dehydrin family.

The chain is Dehydrin Xero 1 (XERO1) from Arabidopsis thaliana (Mouse-ear cress).